Consider the following 130-residue polypeptide: MRHYEIVFMVHPDQSEQVPGMIERYTATITGAQGTIHRLEDWGRRQLAYPINKLHKAHYVLLNVEAPQEAIDELETNFRFNDAVIRSMVMRVKHAVTEASPMVKAKDERRERREDFAEAGDDVEAGDSEE.

A disordered region spans residues 100 to 130 (SPMVKAKDERRERREDFAEAGDDVEAGDSEE). Residues 104-116 (KAKDERRERREDF) show a composition bias toward basic and acidic residues. Residues 117 to 130 (AEAGDDVEAGDSEE) are compositionally biased toward acidic residues.

This sequence belongs to the bacterial ribosomal protein bS6 family.

Binds together with bS18 to 16S ribosomal RNA. This chain is Small ribosomal subunit protein bS6, found in Pectobacterium atrosepticum (strain SCRI 1043 / ATCC BAA-672) (Erwinia carotovora subsp. atroseptica).